A 402-amino-acid chain; its full sequence is Prostaglandin E2 receptor EP1 subtype (402 aa).

Residues 1–35 (MSPCGPLNLSLAGEATTCAAPWVPNTSAVPPSGAS) are Extracellular-facing. 2 N-linked (GlcNAc...) asparagine glycosylation sites follow: Asn-8 and Asn-25. Residues 36–62 (PALPIFSMTLGAVSNLLALALLAQAAG) traverse the membrane as a helical segment. Residues 63–72 (RLRRRRSAAT) are Cytoplasmic-facing. The helical transmembrane segment at 73–96 (FLLFVASLLATDLAGHVIPGALVL) threads the bilayer. The Extracellular portion of the chain corresponds to 97–111 (RLYTAGRAPAGGACH). Cys-110 and Cys-188 form a disulfide bridge. Residues 112–133 (FLGGCMVFFGLCPLLLGCGMAV) traverse the membrane as a helical segment. Residues 134–155 (ERCVGVTRPLLHAARVSVARAR) lie on the Cytoplasmic side of the membrane. Residues 156–177 (LALAAVAAVALAVALLPLARVG) form a helical membrane-spanning segment. Residues 178 to 201 (RYELQYPGTWCFIGLGPPGGWRQA) are Extracellular-facing. The helical transmembrane segment at 202–227 (LLAGLFASLGLVALLAALVCNTLSGL) threads the bilayer. Topologically, residues 228–294 (ALLRARWRRR…ARRARAHDVE (67 aa)) are cytoplasmic. Positions 238-266 (SRRPPPASGPDSRRRWGAHGPRSASASSA) are disordered. The helical transmembrane segment at 295–321 (MVGQLVGIMVVSCICWSPMLVLVALAV) threads the bilayer. Topologically, residues 322-332 (GGWSSTSLQRP) are extracellular. The helical transmembrane segment at 333–354 (LFLAVRLASWNQILDPWVYILL) threads the bilayer. The Cytoplasmic segment spans residues 355-402 (RQAVLRQLLRLLPPRAGAKGGPAGLGLTPSAWEASSLRSSRHSGLSHF).

Belongs to the G-protein coupled receptor 1 family. In terms of processing, phosphorylated. As to expression, abundant in kidney. Lower level expression in lung, skeletal muscle and spleen, lowest expression in testis and not detected in liver brain and heart.

It localises to the cell membrane. Its function is as follows. Receptor for prostaglandin E2 (PGE2). The activity of this receptor is mediated by G(q) proteins which activate a phosphatidylinositol-calcium second messenger system. May play a role as an important modulator of renal function. Implicated the smooth muscle contractile response to PGE2 in various tissues. The sequence is that of Prostaglandin E2 receptor EP1 subtype (PTGER1) from Homo sapiens (Human).